We begin with the raw amino-acid sequence, 423 residues long: Probable sodium/metabolite cotransporter BASS3, chloroplastic (423 aa).

A chloroplast-targeting transit peptide spans 1–45 (MAAAVAASSSSSSSSCAAVGVATASHPHRHRQARFVVSPPAPASP). The next 9 helical transmembrane spans lie at 106–126 (ALLP…PATF), 138–158 (LGGI…ALAF), 165–187 (TIGY…RAFG), 192–214 (FFAG…ASFL), 231–251 (ISSV…VVPV), 254–274 (IAMA…GLLL), 287–307 (PVMP…PLAI), 318–338 (FLLL…GYWI), and 380–400 (VPAA…ASYW).

The protein belongs to the bile acid:sodium symporter (BASS) (TC 2.A.28) family.

The protein resides in the membrane. The protein localises to the plastid. Its subcellular location is the chloroplast envelope. Functionally, may function as sodium-coupled metabolite transporter across the chloroplast envelope. This Oryza sativa subsp. japonica (Rice) protein is Probable sodium/metabolite cotransporter BASS3, chloroplastic (BASS3).